Consider the following 311-residue polypeptide: MAVTVQMLVDRLKLNVIYGDEHLLSKRITTADISRPGLEMTGYFDYYAPERLQLVGMKEWSYLMAMTGHNRYQVLREMFQKETPAIVVARDLEIPEEMYEAAKDTGIAILQSKAPTSRLSGEVSWYLDSCLAERTSVHGVLMDIYGMGVLIQGDSGIGKSETGLELVKRGHRLVADDRVDVYAKDEETLWGEPAEILRHLLEIRGVGIIDIMSLYGASAVKDSSQVQLAIYLENFETGKVFDRLGNGNEEIELSGVKVPRIRIPVKTGRNVSVVIEAAAMNHRAKQMGFDATQTFEDRLTHLISQNEVNDD.

Active-site residues include His-138 and Lys-159. 153–160 is a binding site for ATP; it reads GDSGIGKS. Ser-160 is a binding site for Mg(2+). Asp-177 (proton acceptor; for phosphorylation activity. Proton donor; for dephosphorylation activity) is an active-site residue. An important for the catalytic mechanism of both phosphorylation and dephosphorylation region spans residues 201 to 210; that stretch reads LEIRGVGIID. Glu-202 contributes to the Mg(2+) binding site. Arg-243 is an active-site residue. The interval 264-269 is important for the catalytic mechanism of dephosphorylation; that stretch reads PVKTGR.

Belongs to the HPrK/P family. As to quaternary structure, homohexamer. It depends on Mg(2+) as a cofactor.

The catalysed reaction is [HPr protein]-L-serine + ATP = [HPr protein]-O-phospho-L-serine + ADP + H(+). The enzyme catalyses [HPr protein]-O-phospho-L-serine + phosphate + H(+) = [HPr protein]-L-serine + diphosphate. Its function is as follows. Catalyzes the ATP- as well as the pyrophosphate-dependent phosphorylation of a specific serine residue in HPr, a phosphocarrier protein of the phosphoenolpyruvate-dependent sugar phosphotransferase system (PTS). HprK/P also catalyzes the pyrophosphate-producing, inorganic phosphate-dependent dephosphorylation (phosphorolysis) of seryl-phosphorylated HPr (P-Ser-HPr). The two antagonistic activities of HprK/P are regulated by several intracellular metabolites, which change their concentration in response to the absence or presence of rapidly metabolisable carbon sources (glucose, fructose, etc.) in the growth medium. Therefore, by controlling the phosphorylation state of HPr, HPrK/P is a sensor enzyme that plays a major role in the regulation of carbon metabolism and sugar transport: it mediates carbon catabolite repression (CCR), and regulates PTS-catalyzed carbohydrate uptake and inducer exclusion. This chain is HPr kinase/phosphorylase, found in Streptococcus agalactiae serotype Ia (strain ATCC 27591 / A909 / CDC SS700).